Reading from the N-terminus, the 797-residue chain is Kinesin-like protein Klp68D (797 aa).

The 326-residue stretch at cysteine 19–isoleucine 344 folds into the Kinesin motor domain. ATP is bound at residue glycine 106–threonine 113. Residues lysine 350–glutamine 384 are a coiled coil. Disordered stretches follow at residues arginine 371–arginine 450, serine 610–leucine 656, and alanine 722–lysine 797. The segment covering threonine 386–lysine 396 has biased composition (basic residues). A compositionally biased stretch (acidic residues) spans glutamine 417–serine 431. Residues glutamate 432–arginine 450 show a composition bias toward basic and acidic residues. Positions glutamate 432 to leucine 580 form a coiled coil. Positions glycine 626–arginine 638 are enriched in basic residues. Residues lysine 782 to alanine 791 are compositionally biased toward low complexity.

This sequence belongs to the TRAFAC class myosin-kinesin ATPase superfamily. Kinesin family. Kinesin II subfamily.

It is found in the cytoplasm. It localises to the cytoskeleton. Functionally, plus-end directed microtubule motor that may be used for anterograde axonal transport and could conceivably move cargos in fly neurons different than those moved by kinesin heavy chain or other plus-end directed motors. The polypeptide is Kinesin-like protein Klp68D (Drosophila pseudoobscura pseudoobscura (Fruit fly)).